A 442-amino-acid polypeptide reads, in one-letter code: MSKTYHFIGIKGSGMSALALMLHQMGHKVQGSDVEKYYFTQRGLEQAGITILPFSEDNITPDMELIVGNAFRENNKEVAYALRHQIPFKRYHDFLGDFMKSFISFAVAGAHGKTSTTGLLSHVLKNITDTSYLIGDGTGRGSANAQYFVFESDEYERHFMPYHPEYSIITNIDFDHPDYFTGIADVRNAFNDYAKQVKKALFVYGEDDELKKIEAPAPIYYYGFEEGNDFIAYDITRTTNGSDFKVKHQGEVIGQFHVPAYGKHNILNATAVIANLFVAGIDMALVADHLKTFSGVKRRFTEKIINDTIIIDDFAHHPTEIVATIDAARQKYPSKEIVAIFQPHTFTRTIALLEDFACALNEADSVYLAQIYGSAREVDKGEVKVEDLAAKIIKPSQVVTVENVSPLLDHDNAVYVFMGAGDIQLYEHSFEELLANLTKNNQ.

109-115 (GAHGKTS) contacts ATP.

Belongs to the MurCDEF family.

Its subcellular location is the cytoplasm. It catalyses the reaction UDP-N-acetyl-alpha-D-muramate + L-alanine + ATP = UDP-N-acetyl-alpha-D-muramoyl-L-alanine + ADP + phosphate + H(+). The protein operates within cell wall biogenesis; peptidoglycan biosynthesis. In terms of biological role, cell wall formation. This chain is UDP-N-acetylmuramate--L-alanine ligase, found in Streptococcus pyogenes serotype M49 (strain NZ131).